A 344-amino-acid polypeptide reads, in one-letter code: MLSDRQLLILKIIVDDFIRSGQPVGSRTLSKKEQITFSSATIRNEMADLEELGFIEKTHISSGRVPSQKGYRYYVDHLLPPVRLTQKDVQTIQSIFHEQIYELEKLIQKSAQILSDLTNYTTVVLGPSVKEHKLKTIQIIPLNAETAVAIIVTDTGYVEKHVVTLPPSIPPSDVEKMVNILNERLTGVPLEDLTDKIQTEVAHVLREHIQSYDHMLRMISSSLDLNAPAQMFLSGKMNMLRQPEFSDIDKLRGLFNIIEQEKEFYRLLRKHNQQGIQVKIGTENDVEGMENCSLITATYSVGGEKLGTIAVLGPTRMEYSRVISLLNLVATDLSKALTMWYQKD.

Belongs to the HrcA family.

Negative regulator of class I heat shock genes (grpE-dnaK-dnaJ and groELS operons). Prevents heat-shock induction of these operons. The sequence is that of Heat-inducible transcription repressor HrcA from Anoxybacillus flavithermus (strain DSM 21510 / WK1).